The primary structure comprises 210 residues: Glycerol-3-phosphate acyltransferase (210 aa).

Transmembrane regions (helical) follow at residues 10–30 (ALIL…GIVI), 59–79 (PAAL…VLIA), 87–107 (AAQL…WLGF), 116–136 (FLGT…LTWL), and 161–181 (LLLG…LIFI).

This sequence belongs to the PlsY family. In terms of assembly, probably interacts with PlsX.

Its subcellular location is the cell inner membrane. The catalysed reaction is an acyl phosphate + sn-glycerol 3-phosphate = a 1-acyl-sn-glycero-3-phosphate + phosphate. It participates in lipid metabolism; phospholipid metabolism. In terms of biological role, catalyzes the transfer of an acyl group from acyl-phosphate (acyl-PO(4)) to glycerol-3-phosphate (G3P) to form lysophosphatidic acid (LPA). This enzyme utilizes acyl-phosphate as fatty acyl donor, but not acyl-CoA or acyl-ACP. This chain is Glycerol-3-phosphate acyltransferase, found in Cereibacter sphaeroides (strain ATCC 17025 / ATH 2.4.3) (Rhodobacter sphaeroides).